The sequence spans 293 residues: MATYAVGDLQGCLEPLKCLLQQVAFDPALDRLWLVGDLVNRGPQSLETLRFLYGMRESLVCVLGNHDLHLLAAAKNIERLKKSDTLREILEAPDCAELMEWLRQQKLMHYDEQREVAMVHAGIPPQWSLRKALKYAEEVETALRDDNLLPPFLDGMYGNEPAKWDSDLKGVTRLRVITNYFTRMRFCTAEGKLDLKSKEGLDTAPPGYKPWFQHKERKTRGLRIIFGHWAALEGNVHEPGICALDTGCVWGGSLTLMNVDSGERLSCKCDEHGAALPTVAPLITESSPVSAPR.

It belongs to the Ap4A hydrolase family.

It catalyses the reaction P(1),P(4)-bis(5'-adenosyl) tetraphosphate + H2O = 2 ADP + 2 H(+). Its function is as follows. Hydrolyzes diadenosine 5',5'''-P1,P4-tetraphosphate to yield ADP. This Pseudomonas fluorescens (strain Pf0-1) protein is Bis(5'-nucleosyl)-tetraphosphatase, symmetrical.